A 277-amino-acid chain; its full sequence is Deoxyguanosine kinase, mitochondrial (277 aa).

The transit peptide at 1–39 (MAAGRFLLRRLRASFRSPLRNALVDAPHARAMHDGGGPR) directs the protein to the mitochondrion. Residue 45–53 (GNIAVGKST) coordinates ATP. Substrate is bound by residues E70, Y100, Q111, and R118. Catalysis depends on E141, which acts as the Proton acceptor. Residues R142 and D147 each coordinate substrate. 206-208 (RDR) serves as a coordination point for ATP. Substrate is bound at residue E211. ATP is bound at residue 254–256 (EDF).

Belongs to the DCK/DGK family. As to quaternary structure, homodimer. As to expression, spleen and thymus. Expressed at much lower levels in the brain and liver.

It localises to the mitochondrion. The protein resides in the cytoplasm. The catalysed reaction is 2'-deoxyguanosine + ATP = dGMP + ADP + H(+). It carries out the reaction 2'-deoxyadenosine + ATP = dAMP + ADP + H(+). In terms of biological role, phosphorylates deoxyguanosine and deoxyadenosine in the mitochondrial matrix, with the highest efficiency for deoxyguanosine. In non-replicating cells, where cytosolic dNTP synthesis is down-regulated, mtDNA synthesis depends solely on DGUOK and TK2. Phosphorylates certain nucleoside analogs. Widely used as target of antiviral and chemotherapeutic agents. This chain is Deoxyguanosine kinase, mitochondrial (Dguok), found in Mus musculus (Mouse).